Here is a 169-residue protein sequence, read N- to C-terminus: Sec-independent protein translocase protein TatB (169 aa).

A helical transmembrane segment spans residues 1 to 21 (MFDIGFLELAVIAVIGLIVIG). Residues 98–169 (EAEEAKLQTP…TTKTEPANDR (72 aa)) form a disordered region. The segment covering 134-143 (PPEEPSKVEA) has biased composition (basic and acidic residues). Positions 146–169 (SAETPQANNQDQQPTTKTEPANDR) are enriched in polar residues.

It belongs to the TatB family. As to quaternary structure, the Tat system comprises two distinct complexes: a TatABC complex, containing multiple copies of TatA, TatB and TatC subunits, and a separate TatA complex, containing only TatA subunits. Substrates initially bind to the TatABC complex, which probably triggers association of the separate TatA complex to form the active translocon.

The protein localises to the cell inner membrane. Its function is as follows. Part of the twin-arginine translocation (Tat) system that transports large folded proteins containing a characteristic twin-arginine motif in their signal peptide across membranes. Together with TatC, TatB is part of a receptor directly interacting with Tat signal peptides. TatB may form an oligomeric binding site that transiently accommodates folded Tat precursor proteins before their translocation. In Saccharophagus degradans (strain 2-40 / ATCC 43961 / DSM 17024), this protein is Sec-independent protein translocase protein TatB.